A 242-amino-acid chain; its full sequence is UPF0173 metal-dependent hydrolase APE_1117 (242 aa).

The protein belongs to the UPF0173 family.

The sequence is that of UPF0173 metal-dependent hydrolase APE_1117 from Aeropyrum pernix (strain ATCC 700893 / DSM 11879 / JCM 9820 / NBRC 100138 / K1).